A 495-amino-acid polypeptide reads, in one-letter code: Keratin, type II cytoskeletal 74 (495 aa).

The segment at 1-105 (MASCHTAGHR…DPEIQKVRAQ (105 aa)) is head. A coil 1A region spans residues 106 to 141 (EREQIKALNDKFASFIDKVRFLEQQNQVLQTKWELL). An IF rod domain is found at 106–419 (EREQIKALND…KLLEGEENRM (314 aa)). The interval 142–160 (QQLDLSNCRRNLEPVYEAH) is linker 1. The interval 161-252 (ISNLRKQLEM…CLYDEEISQL (92 aa)) is coil 1B. Residues 253 to 276 (QTHASETSVILSMDNNRDLDLAGI) form a linker 12 region. Positions 277–415 (IAEVRAHYED…ATYRKLLEGE (139 aa)) are coil 2. The interval 416 to 495 (ENRMSGENPS…AAGTLARKTT (80 aa)) is tail. The interval 449–495 (DSEAGNAVGSPSTPRNSQSKTRGSSVDPRDAQDESAAAAGTLARKTT) is disordered. Residues 457 to 472 (GSPSTPRNSQSKTRGS) are compositionally biased toward polar residues.

The protein belongs to the intermediate filament family. In terms of assembly, heterotetramer of two type I and two type II keratins. As to expression, expressed in epidermis with a particularly strong staining in the nail matrix, nail bed and hyponychium (at protein level).

Functionally, has a role in hair formation. Specific component of keratin intermediate filaments in the inner root sheath (IRS) of the hair follicle. This is Keratin, type II cytoskeletal 74 from Mus musculus (Mouse).